An 85-amino-acid chain; its full sequence is Large ribosomal subunit protein bL27 (85 aa).

Positions 1–23 (MAHKKAGGSSRNGRDSESKRLGV) are disordered.

It belongs to the bacterial ribosomal protein bL27 family.

In Methylococcus capsulatus (strain ATCC 33009 / NCIMB 11132 / Bath), this protein is Large ribosomal subunit protein bL27.